Consider the following 526-residue polypeptide: Glucose-6-phosphate isomerase (526 aa).

The active-site Proton donor is the glutamate 323. Active-site residues include histidine 352 and lysine 454.

The protein belongs to the GPI family.

It is found in the cytoplasm. It catalyses the reaction alpha-D-glucose 6-phosphate = beta-D-fructose 6-phosphate. It functions in the pathway carbohydrate biosynthesis; gluconeogenesis. The protein operates within carbohydrate degradation; glycolysis; D-glyceraldehyde 3-phosphate and glycerone phosphate from D-glucose: step 2/4. Catalyzes the reversible isomerization of glucose-6-phosphate to fructose-6-phosphate. The sequence is that of Glucose-6-phosphate isomerase from Prochlorococcus marinus subsp. pastoris (strain CCMP1986 / NIES-2087 / MED4).